An 880-amino-acid chain; its full sequence is Interference hedgehog (880 aa).

The signal sequence occupies residues 1 to 20 (MTLLTSSLLLFSLLTSRLEA). The Extracellular segment spans residues 21–703 (IPVLEKSPAH…ETFNMSPMLT (683 aa)). Ig-like C2-type domains lie at 45–142 (PGVR…TARL), 132–232 (PLVV…ERIQ), 252–340 (PHLL…YIKV), and 346–432 (PQIV…LQVN). Disulfide bonds link cysteine 68-cysteine 126, cysteine 173-cysteine 220, cysteine 276-cysteine 324, and cysteine 367-cysteine 414. N-linked (GlcNAc...) asparagine glycosylation is found at asparagine 102 and asparagine 209. The disordered stretch occupies residues 426 to 467 (GTLLQVNPKQIQEPRESGGTHRPKPNQGSKQKQMYPPTPPNV). 2 consecutive Fibronectin type-III domains span residues 461 to 567 (PPTP…LQPG) and 575 to 670 (VPEL…TQRP). N-linked (GlcNAc...) asparagine glycosylation is present at asparagine 466. The heparin site is built by arginine 497, lysine 501, lysine 503, and arginine 541. The N-linked (GlcNAc...) asparagine glycan is linked to asparagine 557. A disordered region spans residues 662-697 (LKQGRTQRPKTSTTEEPTLQMGDRDTTTPSHNETFN). Polar residues-rich tracts occupy residues 665 to 678 (GRTQ…TEEP) and 688 to 697 (TTPSHNETFN). Asparagine 693 is a glycosylation site (N-linked (GlcNAc...) asparagine). The chain crosses the membrane as a helical span at residues 704–724 (GTIGGGAVLILLLISTCLCVC). Over 725–880 (RRRTSRSRGN…SSGSLNSVGV (156 aa)) the chain is Cytoplasmic. Disordered regions lie at residues 728–762 (TSRS…QRQR) and 775–880 (QQQQ…SVGV). Low complexity-rich tracts occupy residues 823–837 (RAGG…NNNN) and 864–880 (SSRS…SVGV).

It belongs to the immunoglobulin superfamily. IHOG family. As to quaternary structure, homodimer. Heterotetramer; 2 iHog chains bind 2 hh chains when facilitated by heparin, heparin is required to promote high-affinity interactions between hh and iHog.

The protein localises to the membrane. Its function is as follows. Mediates response to the active Hedgehog (Hh) protein signal in embryos, functioning upstream or at the level of patched (ptc). In Drosophila sechellia (Fruit fly), this protein is Interference hedgehog.